Reading from the N-terminus, the 75-residue chain is Putative antitoxin VapB17 (75 aa).

In terms of biological role, putative antitoxin component of a possible type II toxin-antitoxin (TA) system. The cognate toxin is VapC17. This chain is Putative antitoxin VapB17 (vapB17), found in Mycobacterium tuberculosis (strain CDC 1551 / Oshkosh).